A 147-amino-acid chain; its full sequence is D-aminoacyl-tRNA deacylase (147 aa).

The Gly-cisPro motif, important for rejection of L-amino acids motif lies at 136–137 (GP).

Belongs to the DTD family. In terms of assembly, homodimer.

The protein localises to the cytoplasm. It catalyses the reaction glycyl-tRNA(Ala) + H2O = tRNA(Ala) + glycine + H(+). It carries out the reaction a D-aminoacyl-tRNA + H2O = a tRNA + a D-alpha-amino acid + H(+). Functionally, an aminoacyl-tRNA editing enzyme that deacylates mischarged D-aminoacyl-tRNAs. Also deacylates mischarged glycyl-tRNA(Ala), protecting cells against glycine mischarging by AlaRS. Acts via tRNA-based rather than protein-based catalysis; rejects L-amino acids rather than detecting D-amino acids in the active site. By recycling D-aminoacyl-tRNA to D-amino acids and free tRNA molecules, this enzyme counteracts the toxicity associated with the formation of D-aminoacyl-tRNA entities in vivo and helps enforce protein L-homochirality. This is D-aminoacyl-tRNA deacylase from Streptococcus equi subsp. equi (strain 4047).